The primary structure comprises 229 residues: ABC transporter I family member 1 (229 aa).

The ABC transporter domain occupies 11-228 (LLLQNVSCMR…LIDMLDRADI (218 aa)). Residue 43-50 (GTNGSGKS) participates in ATP binding.

This sequence belongs to the ABC transporter superfamily. ABCI family.

The protein resides in the membrane. It catalyses the reaction heme b(in) + ATP + H2O = heme b(out) + ADP + phosphate + H(+). In terms of biological role, part of the ABC transporter complex CcmAB involved in the biogenesis of c-type cytochromes; once thought to export heme, this seems not to be the case, but its exact role is uncertain. Responsible for energy coupling to the transport system. This chain is ABC transporter I family member 1 (ABCI1), found in Arabidopsis thaliana (Mouse-ear cress).